We begin with the raw amino-acid sequence, 383 residues long: Putative glutamate--cysteine ligase 2-2 (383 aa).

The protein belongs to the glutamate--cysteine ligase type 2 family. YbdK subfamily.

It catalyses the reaction L-cysteine + L-glutamate + ATP = gamma-L-glutamyl-L-cysteine + ADP + phosphate + H(+). ATP-dependent carboxylate-amine ligase which exhibits weak glutamate--cysteine ligase activity. This chain is Putative glutamate--cysteine ligase 2-2, found in Legionella pneumophila (strain Lens).